We begin with the raw amino-acid sequence, 458 residues long: Ammonium transporter Rh type B (458 aa).

Residues 1–11 (MTDAATNMRLK) are Cytoplasmic-facing. The helical transmembrane segment at 12–32 (LPITCFILEIILIILFGTLVQ) threads the bilayer. Residues 33–58 (YDYETDAKEWHNTSHQDYENDFYFRY) lie on the Extracellular side of the membrane. Asn44 carries N-linked (GlcNAc...) asparagine glycosylation. A helical membrane pass occupies residues 59 to 79 (PSFQDVHVMIFVGFGFLMTFL). The Cytoplasmic segment spans residues 80–83 (QRYG). A helical transmembrane segment spans residues 84 to 104 (FGSVGFNFLIAAFSLQWATLM). Residues 105–121 (QGFFHGMHGGKIHIGVE) are Extracellular-facing. The helical transmembrane segment at 122 to 142 (SMINADFCTGSVLISFGAVLG) threads the bilayer. The Cytoplasmic segment spans residues 143 to 151 (KTSPIQLLT). The helical transmembrane segment at 152–172 (MAIFEVTLFAVNEFILLSLLG) threads the bilayer. The Extracellular portion of the chain corresponds to 173–176 (TKDA). The helical transmembrane segment at 177 to 197 (GGSMTIHTFGAYFGLMVTRIL) threads the bilayer. At 198–216 (YRPNLDKSKHRNSSVYHSD) the chain is on the cytoplasmic side. A helical transmembrane segment spans residues 217–237 (LFAMIGTVYLWMFWPSFNSAI). The Extracellular segment spans residues 238–247 (TAHGDDQHRT). The chain crosses the membrane as a helical span at residues 248-270 (ALNTYYSLAACTLATYGMSAITS). At 271 to 274 (HDGK) the chain is on the cytoplasmic side. Residues 275-295 (LDMVHIQNAALAGGVAVGTAG) traverse the membrane as a helical segment. At 296–298 (EMM) the chain is on the extracellular side. Residues 299-319 (LTPFGSMIVGFMAGIISVLGF) form a helical membrane-spanning segment. Residues 320 to 340 (KFLSPILEDKLKIQDTCGIHN) lie on the Cytoplasmic side of the membrane. A helical transmembrane segment spans residues 341-361 (LHGMPGVLGAIVGAVTAALAT). Over 362–391 (TDVYGQGMADVFPAVADGSVNATKQGGIQA) the chain is Extracellular. Residues 392–412 (LSLAITLGIAVLGGLIVGFVL) traverse the membrane as a helical segment. Topologically, residues 413–458 (KLPVFGTPPDTLCFEDSVYWEVPGSESPEEGELTSVKPEETEHLNS) are cytoplasmic. Residues 436–458 (GSESPEEGELTSVKPEETEHLNS) are disordered. A compositionally biased stretch (basic and acidic residues) spans 449 to 458 (KPEETEHLNS).

Belongs to the ammonium transporter (TC 2.A.49) family. Rh subfamily. Specifically expressed in the gill by pavement cells (at protein level).

The protein localises to the apicolateral cell membrane. Its subcellular location is the cytoplasmic vesicle membrane. Functions as an ammonia transporter. May play a role in the elimination of ammonia in the gill. This Takifugu rubripes (Japanese pufferfish) protein is Ammonium transporter Rh type B (rhbg).